We begin with the raw amino-acid sequence, 607 residues long: uncharacterized protein (607 aa).

2 disordered regions span residues 28 to 114 (GAER…KLRR) and 142 to 188 (DQER…NNSS). Polar residues predominate over residues 35–50 (SSHGSINSRSASPNKA). Basic and acidic residues-rich tracts occupy residues 90 to 102 (VNGEGAEKGDHDT) and 161 to 174 (KENKSLKTTAKDLS). Residues 177–188 (SSSSMKKANNSS) show a composition bias toward low complexity. PHD-type zinc fingers lie at residues 263-312 (NDYC…CKHH) and 406-459 (PILC…HSDH).

This is an uncharacterized protein from Schizosaccharomyces pombe (strain 972 / ATCC 24843) (Fission yeast).